Reading from the N-terminus, the 179-residue chain is Large ribosomal subunit protein uL6 (179 aa).

The protein belongs to the universal ribosomal protein uL6 family. In terms of assembly, part of the 50S ribosomal subunit.

Functionally, this protein binds to the 23S rRNA, and is important in its secondary structure. It is located near the subunit interface in the base of the L7/L12 stalk, and near the tRNA binding site of the peptidyltransferase center. The polypeptide is Large ribosomal subunit protein uL6 (Acidothermus cellulolyticus (strain ATCC 43068 / DSM 8971 / 11B)).